Consider the following 436-residue polypeptide: Trigger factor (436 aa).

The 86-residue stretch at 163-248 (GDRVVLDFAG…VKEVAEGVLP (86 aa)) folds into the PPIase FKBP-type domain.

Belongs to the FKBP-type PPIase family. Tig subfamily.

Its subcellular location is the cytoplasm. The enzyme catalyses [protein]-peptidylproline (omega=180) = [protein]-peptidylproline (omega=0). Its function is as follows. Involved in protein export. Acts as a chaperone by maintaining the newly synthesized protein in an open conformation. Functions as a peptidyl-prolyl cis-trans isomerase. This is Trigger factor from Bordetella parapertussis (strain 12822 / ATCC BAA-587 / NCTC 13253).